The chain runs to 677 residues: DNA polymerase epsilon subunit B (677 aa).

It belongs to the DNA polymerase epsilon subunit B family. In terms of assembly, heterotetramer. Consists of four subunits: POL2, DPB2, DPB3 and DPB4.

It localises to the nucleus. Functionally, as accessory component of the DNA polymerase epsilon (DNA polymerase II) participates in chromosomal DNA replication. This Eremothecium gossypii (strain ATCC 10895 / CBS 109.51 / FGSC 9923 / NRRL Y-1056) (Yeast) protein is DNA polymerase epsilon subunit B (DPB2).